A 579-amino-acid chain; its full sequence is ATP-dependent RNA helicase SUV3, mitochondrial (579 aa).

The N-terminal 59 residues, 1-59 (MAVAAALLRRRALYSALASPSWLHDTSSCYICSISGTHSLVNHPNLRLQRGYHNSGKFD), are a transit peptide targeting the mitochondrion. The 142-residue stretch at 72–213 (NAREKKRNVF…QRILEPTGDV (142 aa)) folds into the Helicase ATP-binding domain. Residue 85 to 92 (GPTNSGKT) coordinates ATP. Residues 214-388 (VTVQYYERLS…GLFPTFDVLS (175 aa)) form the Helicase C-terminal domain. An N-linked (GlcNAc...) asparagine glycan is attached at Asn309.

This sequence belongs to the helicase family. Homodimer; in free form. Component of the mitochondrial degradosome (mtEXO) complex which is a heteropentamer containing 2 copies of SUPV3L1 and 3 copies of PNPT1. Mg(2+) serves as cofactor. Mn(2+) is required as a cofactor.

The protein resides in the nucleus. Its subcellular location is the mitochondrion matrix. The protein localises to the mitochondrion nucleoid. The catalysed reaction is ATP + H2O = ADP + phosphate + H(+). Major helicase player in mitochondrial RNA metabolism. Component of the mitochondrial degradosome (mtEXO) complex, that degrades 3' overhang double-stranded RNA with a 3'-to-5' directionality in an ATP-dependent manner. ATPase and ATP-dependent multisubstrate helicase, able to unwind double-stranded (ds) DNA and RNA, and RNA/DNA heteroduplexes in the 5'-to-3' direction. Plays a role in the RNA surveillance system in mitochondria; regulates the stability of mature mRNAs, the removal of aberrantly formed mRNAs and the rapid degradation of non coding processing intermediates. Confers salinity and drought stress tolerances by maintaining both photosynthesis and antioxidant machinery, probably via an increase in plant hormones levels such as gibberellic acid (GA(3)), the cytokinin zeatin (Z) and indole-3-acetic acid (IAA). The sequence is that of ATP-dependent RNA helicase SUV3, mitochondrial from Oryza sativa subsp. japonica (Rice).